A 187-amino-acid polypeptide reads, in one-letter code: Ribosome-recycling factor (187 aa).

It belongs to the RRF family.

It localises to the cytoplasm. Its function is as follows. Responsible for the release of ribosomes from messenger RNA at the termination of protein biosynthesis. May increase the efficiency of translation by recycling ribosomes from one round of translation to another. This chain is Ribosome-recycling factor, found in Bradyrhizobium sp. (strain BTAi1 / ATCC BAA-1182).